Consider the following 119-residue polypeptide: uncharacterized protein (119 aa).

The N-terminal stretch at 1–18 (MPAVFMLASSSALQCGRG) is a signal peptide. Residues 23 to 100 (PRTEVGAGHS…MFPGPLRGPA (78 aa)) are disordered. Residues 43–71 (GNQTSVIPATSRQAALGTSWTQRRTQPLQ) are compositionally biased toward polar residues. Residue N44 is glycosylated (N-linked (GlcNAc...) asparagine).

It is found in the secreted. This is an uncharacterized protein from Homo sapiens (Human).